Consider the following 200-residue polypeptide: MEEKPSKVSLKSSDRQGSDEESVHSDTRDLWTTTTLSQAQLNMPLSEVCEGFDEEGRNISKTRGWHSPGRGSLDEGYKASHKPEELDEHALVELELHRGSSMEINLGEKDTASQIEAEKSSSMSSLNIAKHMPHRAYWAEQQSRLPLPLMELMENEALEILTKALRSYQLGIGRDHFLTKELQRYIEGLKKRRSKRLYVN.

Basic and acidic residues predominate over residues 1–29; that stretch reads MEEKPSKVSLKSSDRQGSDEESVHSDTRD. Disordered regions lie at residues 1-31 and 58-78; these read MEEKPSKVSLKSSDRQGSDEESVHSDTRDLW and NISKTRGWHSPGRGSLDEGYK.

Component of the CatSper complex or CatSpermasome composed of the core pore-forming members CATSPER1, CATSPER2, CATSPER3 and CATSPER4 as well as auxiliary members CATSPERB, CATSPERG, CATSPERD, CATSPERE, CATSPERZ, C2CD6/CATSPERT, TMEM249, TMEM262 and EFCAB9. HSPA1 may be an additional auxiliary complex member. The core complex members CATSPER1, CATSPER2, CATSPER3 and CATSPER4 form a heterotetrameric channel. The auxiliary CATSPERB, CATSPERG, CATSPERD and CATSPERE subunits form a pavilion-like structure over the pore which stabilizes the complex through interactions with CATSPER4, CATSPER3, CATSPER1 and CATSPER2 respectively. TMEM262/CATSPERH interacts with CATSPERB, further stabilizing the complex. C2CD6/CATSPERT interacts at least with CATSPERD and is required for targeting the CatSper complex in the flagellar membrane. Interacts with EFCAB9; the interaction is direct, Ca(2+)-dependent and connects EFCAB9 with the CatSper complex. Dissociates from EFCAB9 at elevated pH.

It is found in the cell projection. It localises to the cilium. The protein localises to the flagellum membrane. In terms of biological role, auxiliary component of the CatSper complex, a complex involved in sperm cell hyperactivation. Sperm cell hyperactivation is needed for sperm motility which is essential late in the preparation of sperm for fertilization. Required for a distribution of the CatSper complex in linear quadrilateral nanodomains along the flagellum, maximizing fertilization inside the mammalian female reproductive tract. Together with EFCAB9, associates with the CatSper channel pore and is required for the two-row structure of each single CatSper channel. The sequence is that of Cation channel sperm-associated auxiliary subunit zeta from Homo sapiens (Human).